Consider the following 337-residue polypeptide: Dolichyl-phosphate beta-glucosyltransferase ALG5C (337 aa).

Over 1–6 (MNDLPP) the chain is Lumenal. Residues 7-27 (IANLISNILFVLLIITFLYAL) traverse the membrane as a helical segment. Topologically, residues 28–337 (CSRFVSDKTL…ADTPISDFEV (310 aa)) are cytoplasmic.

It belongs to the glycosyltransferase 2 family.

The protein localises to the endoplasmic reticulum membrane. It catalyses the reaction a di-trans,poly-cis-dolichyl phosphate + UDP-alpha-D-glucose = a di-trans,poly-cis-dolichyl beta-D-glucosyl phosphate + UDP. Its pathway is protein modification; protein glycosylation. In terms of biological role, dolichyl-phosphate beta-glucosyltransferase involved in the glycosylation of glycoproteins through the synthesis of dolichyl beta-D-glucosyl phosphate which serves as a sugar donor for transfer of three glucose residues to the Man-9-GlcNAc-2-PP-dolichol precursor to N-glycans. The protein is Dolichyl-phosphate beta-glucosyltransferase ALG5C of Trichomonas vaginalis (strain ATCC PRA-98 / G3).